The chain runs to 405 residues: Acetylornithine aminotransferase 1 (405 aa).

Residues 108-109 and F141 each bind pyridoxal 5'-phosphate; that span reads GA. R144 contributes to the N(2)-acetyl-L-ornithine binding site. 226–229 lines the pyridoxal 5'-phosphate pocket; that stretch reads DEVQ. K255 bears the N6-(pyridoxal phosphate)lysine mark. T283 contacts N(2)-acetyl-L-ornithine. Residue T284 participates in pyridoxal 5'-phosphate binding.

This sequence belongs to the class-III pyridoxal-phosphate-dependent aminotransferase family. ArgD subfamily. Homodimer. Pyridoxal 5'-phosphate serves as cofactor.

It localises to the cytoplasm. It catalyses the reaction N(2)-acetyl-L-ornithine + 2-oxoglutarate = N-acetyl-L-glutamate 5-semialdehyde + L-glutamate. The protein operates within amino-acid biosynthesis; L-arginine biosynthesis; N(2)-acetyl-L-ornithine from L-glutamate: step 4/4. The chain is Acetylornithine aminotransferase 1 from Pseudomonas syringae pv. tomato (strain ATCC BAA-871 / DC3000).